Consider the following 507-residue polypeptide: RNA-binding protein Nova-1 (507 aa).

Positions 1–44 are disordered; that stretch reads MMAAAPIQQNGTHTGVPIDLDPPDSRKRPLEAPPEAGSTKRTNT. A Bipartite nuclear localization signal motif is present at residues 27–43; it reads KRPLEAPPEAGSTKRTN. Residues 49 to 116 form the KH 1 domain; sequence QYFLKVLIPS…EALNAVHGFI (68 aa). Residues 139–171 form a disordered region; sequence QTTVNPDRIKQTLPSSPTTTKSSPSDPMTTSRA. A compositionally biased stretch (low complexity) spans 150–169; sequence TLPSSPTTTKSSPSDPMTTS. Ser154 carries the post-translational modification Phosphoserine. KH domains are found at residues 171–237 and 421–488; these read ANQV…VELI and KDVV…QYLI. The segment at 419–503 is required for RNA binding; sequence GSKDVVEIAV…YEQGVRAANP (85 aa).

As to quaternary structure, interacts with PTBP2; the interaction is direct. Expressed in neurons of the cortex, sub-cortex, cerebellum and brainstem (at protein level). Expressed in motor neurons, but not in glia.

The protein localises to the nucleus. In terms of biological role, functions to regulate alternative splicing in neurons by binding pre-mRNA in a sequence-specific manner to activate exon inclusion or exclusion. It binds specifically to the sequences 5'-YCAY-3' and regulates splicing in only a subset of regulated exons. Binding to an exonic 5'-YCAY-3' cluster changes the protein complexes assembled on pre-mRNA, blocking U1 snRNP binding and exon inclusion, whereas binding to an intronic 5'-YCAY-3' cluster enhances spliceosome assembly and exon inclusion. Binding to 5'-YCAY-3' clusters results in a local and asymmetric action to regulate spliceosome assembly and alternative splicing in neurons. Binding to an exonic 5'-YCAY-3' cluster changed the protein complexes assembled on pre-mRNA, blocking U1 snRNP (small nuclear ribonucleoprotein) binding and exon inclusion, whereas binding to an intronic 5'-YCAY-3' cluster enhanced spliceosome assembly and exon inclusion. With NOVA1, they perform unique biological functions in different brain areas and cell types. Autoregulates its own expression by acting as a splicing repressor. Acts to activate the inclusion of exon E3A in the glycine receptor alpha-2 chain and of exon E9 in gamma-aminobutyric-acid receptor gamma-2 subunit via a distal downstream UCAU-rich intronic splicing enhancer. Acts to regulate a novel glycine receptor alpha-2 chain splice variant (alpha-2N) in developing spinal cord. The sequence is that of RNA-binding protein Nova-1 from Mus musculus (Mouse).